A 352-amino-acid chain; its full sequence is Quinolinate synthase (352 aa).

The iminosuccinate site is built by His-48 and Ser-69. Cys-114 contributes to the [4Fe-4S] cluster binding site. Residues Tyr-140–Asn-142 and Ser-157 each bind iminosuccinate. Cys-201 is a [4Fe-4S] cluster binding site. Residues His-227–Glu-229 and Thr-244 contribute to the iminosuccinate site. Cys-298 lines the [4Fe-4S] cluster pocket.

The protein belongs to the quinolinate synthase family. Type 1 subfamily. [4Fe-4S] cluster is required as a cofactor.

Its subcellular location is the cytoplasm. The enzyme catalyses iminosuccinate + dihydroxyacetone phosphate = quinolinate + phosphate + 2 H2O + H(+). It functions in the pathway cofactor biosynthesis; NAD(+) biosynthesis; quinolinate from iminoaspartate: step 1/1. Functionally, catalyzes the condensation of iminoaspartate with dihydroxyacetone phosphate to form quinolinate. The chain is Quinolinate synthase from Pseudomonas aeruginosa (strain UCBPP-PA14).